The following is a 476-amino-acid chain: Aspartyl/glutamyl-tRNA(Asn/Gln) amidotransferase subunit B 1 (476 aa).

It belongs to the GatB/GatE family. GatB subfamily. As to quaternary structure, heterotrimer of A, B and C subunits.

It carries out the reaction L-glutamyl-tRNA(Gln) + L-glutamine + ATP + H2O = L-glutaminyl-tRNA(Gln) + L-glutamate + ADP + phosphate + H(+). The enzyme catalyses L-aspartyl-tRNA(Asn) + L-glutamine + ATP + H2O = L-asparaginyl-tRNA(Asn) + L-glutamate + ADP + phosphate + 2 H(+). Its function is as follows. Allows the formation of correctly charged Asn-tRNA(Asn) or Gln-tRNA(Gln) through the transamidation of misacylated Asp-tRNA(Asn) or Glu-tRNA(Gln) in organisms which lack either or both of asparaginyl-tRNA or glutaminyl-tRNA synthetases. The reaction takes place in the presence of glutamine and ATP through an activated phospho-Asp-tRNA(Asn) or phospho-Glu-tRNA(Gln). This chain is Aspartyl/glutamyl-tRNA(Asn/Gln) amidotransferase subunit B 1 (gatB1), found in Clostridium acetobutylicum (strain ATCC 824 / DSM 792 / JCM 1419 / IAM 19013 / LMG 5710 / NBRC 13948 / NRRL B-527 / VKM B-1787 / 2291 / W).